A 205-amino-acid polypeptide reads, in one-letter code: Large ribosomal subunit protein uL4 (205 aa).

This sequence belongs to the universal ribosomal protein uL4 family. Part of the 50S ribosomal subunit.

One of the primary rRNA binding proteins, this protein initially binds near the 5'-end of the 23S rRNA. It is important during the early stages of 50S assembly. It makes multiple contacts with different domains of the 23S rRNA in the assembled 50S subunit and ribosome. Functionally, forms part of the polypeptide exit tunnel. This Dinoroseobacter shibae (strain DSM 16493 / NCIMB 14021 / DFL 12) protein is Large ribosomal subunit protein uL4.